The primary structure comprises 190 residues: Elongation factor P-like protein (190 aa).

It belongs to the elongation factor P family.

In Escherichia fergusonii (strain ATCC 35469 / DSM 13698 / CCUG 18766 / IAM 14443 / JCM 21226 / LMG 7866 / NBRC 102419 / NCTC 12128 / CDC 0568-73), this protein is Elongation factor P-like protein.